The following is a 247-amino-acid chain: ATP synthase subunit a, chloroplastic (247 aa).

A run of 5 helical transmembrane segments spans residues 38–58, 95–115, 134–154, 199–219, and 220–240; these read QVLITSWVVIAILLGSAAIAV, VPFIGTMFLFIFVSNWSGALL, INTTVALALPTSVAYFYAGLT, LVVVVLVSLVPSVVPIPVMFL, and GLFTSSIQALIFATLAAAYIG.

This sequence belongs to the ATPase A chain family. As to quaternary structure, F-type ATPases have 2 components, CF(1) - the catalytic core - and CF(0) - the membrane proton channel. CF(1) has five subunits: alpha(3), beta(3), gamma(1), delta(1), epsilon(1). CF(0) has four main subunits: a, b, b' and c.

It localises to the plastid. The protein localises to the chloroplast thylakoid membrane. Key component of the proton channel; it plays a direct role in the translocation of protons across the membrane. The sequence is that of ATP synthase subunit a, chloroplastic from Illicium oligandrum (Star anise).